Consider the following 685-residue polypeptide: Kinesin-related protein 11 (685 aa).

The 402-residue stretch at 4–405 folds into the Kinesin motor domain; it reads NISVSVRARP…LKFASRAKKI (402 aa). The disordered stretch occupies residues 36-105; it reads TSLPPPITQP…TTVPASPAPT (70 aa). Over residues 47–105 the composition is skewed to low complexity; that stretch reads SSLPPISTPIKSSSSSSTSTSAGSLKTPLKTPLKTPLKTPLKTNSTTTNTTVPASPAPT. 156-163 provides a ligand contact to ATP; it reads GITSSGKT. Residues 411-488 are a coiled coil; that stretch reads VNEILDDKAL…KINNLNKLIL (78 aa). A disordered region spans residues 495-568; sequence NSASKGGSGS…QSTSSLTIGG (74 aa). Residues 511 to 520 are compositionally biased toward polar residues; the sequence is RSTFVSPSQN. Residues 533–565 show a composition bias toward low complexity; it reads PNSFSNLLLQSPSQNNNNNSHISPLSQSTSSLT. Positions 574 to 683 form a coiled coil; the sequence is FESNELIQIQ…LKSKIQEYEV (110 aa).

It belongs to the TRAFAC class myosin-kinesin ATPase superfamily. Kinesin family.

It is found in the cytoplasm. The protein localises to the cytoskeleton. Its function is as follows. Microtubule-associated force-producing protein that plays a role in organelle transport. Its motor activity is directed toward the microtubule's plus end. In Dictyostelium discoideum (Social amoeba), this protein is Kinesin-related protein 11 (kif11).